The primary structure comprises 313 residues: tRNA uridine(34) hydroxylase (313 aa).

The 95-residue stretch at 124–218 (SDPEVLLIDT…YLEEVPQEET (95 aa)) folds into the Rhodanese domain. Catalysis depends on Cys178, which acts as the Cysteine persulfide intermediate.

It belongs to the TrhO family.

The enzyme catalyses uridine(34) in tRNA + AH2 + O2 = 5-hydroxyuridine(34) in tRNA + A + H2O. Functionally, catalyzes oxygen-dependent 5-hydroxyuridine (ho5U) modification at position 34 in tRNAs. The sequence is that of tRNA uridine(34) hydroxylase from Pseudomonas fluorescens (strain Pf0-1).